A 375-amino-acid chain; its full sequence is Queuine tRNA-ribosyltransferase (375 aa).

Aspartate 89 serves as the catalytic Proton acceptor. Substrate-binding positions include 89-93 (DSGGF), aspartate 143, glutamine 187, and glycine 214. The RNA binding stretch occupies residues 245 to 251 (GVGKPED). Aspartate 264 acts as the Nucleophile in catalysis. An RNA binding; important for wobble base 34 recognition region spans residues 269-273 (TRNAR). Zn(2+)-binding residues include cysteine 302, cysteine 304, cysteine 307, and histidine 333.

It belongs to the queuine tRNA-ribosyltransferase family. Homodimer. Within each dimer, one monomer is responsible for RNA recognition and catalysis, while the other monomer binds to the replacement base PreQ1. Requires Zn(2+) as cofactor.

The enzyme catalyses 7-aminomethyl-7-carbaguanine + guanosine(34) in tRNA = 7-aminomethyl-7-carbaguanosine(34) in tRNA + guanine. The protein operates within tRNA modification; tRNA-queuosine biosynthesis. Functionally, catalyzes the base-exchange of a guanine (G) residue with the queuine precursor 7-aminomethyl-7-deazaguanine (PreQ1) at position 34 (anticodon wobble position) in tRNAs with GU(N) anticodons (tRNA-Asp, -Asn, -His and -Tyr). Catalysis occurs through a double-displacement mechanism. The nucleophile active site attacks the C1' of nucleotide 34 to detach the guanine base from the RNA, forming a covalent enzyme-RNA intermediate. The proton acceptor active site deprotonates the incoming PreQ1, allowing a nucleophilic attack on the C1' of the ribose to form the product. After dissociation, two additional enzymatic reactions on the tRNA convert PreQ1 to queuine (Q), resulting in the hypermodified nucleoside queuosine (7-(((4,5-cis-dihydroxy-2-cyclopenten-1-yl)amino)methyl)-7-deazaguanosine). This is Queuine tRNA-ribosyltransferase from Photobacterium profundum (strain SS9).